The chain runs to 241 residues: Small ribosomal subunit protein uS2 (241 aa).

Belongs to the universal ribosomal protein uS2 family.

The sequence is that of Small ribosomal subunit protein uS2 from Cronobacter sakazakii (strain ATCC BAA-894) (Enterobacter sakazakii).